Here is a 572-residue protein sequence, read N- to C-terminus: Proline--tRNA ligase (572 aa).

It belongs to the class-II aminoacyl-tRNA synthetase family. ProS type 1 subfamily. In terms of assembly, homodimer.

It is found in the cytoplasm. The enzyme catalyses tRNA(Pro) + L-proline + ATP = L-prolyl-tRNA(Pro) + AMP + diphosphate. Catalyzes the attachment of proline to tRNA(Pro) in a two-step reaction: proline is first activated by ATP to form Pro-AMP and then transferred to the acceptor end of tRNA(Pro). As ProRS can inadvertently accommodate and process non-cognate amino acids such as alanine and cysteine, to avoid such errors it has two additional distinct editing activities against alanine. One activity is designated as 'pretransfer' editing and involves the tRNA(Pro)-independent hydrolysis of activated Ala-AMP. The other activity is designated 'posttransfer' editing and involves deacylation of mischarged Ala-tRNA(Pro). The misacylated Cys-tRNA(Pro) is not edited by ProRS. This chain is Proline--tRNA ligase, found in Haemophilus influenzae (strain PittEE).